The following is a 597-amino-acid chain: Protein IQ-DOMAIN 29 (597 aa).

The interval 1 to 31 (MGKTPSPGKWIKSLLGKKSSKSSLEKGGEKL) is disordered. 3 IQ domains span residues 106 to 134 (LEEAATKVQAALRAQQAREESQNLKGITR), 135 to 153 (VQAVIRGHLVRRQAVATYS), and 157 to 183 (GIVKVQALVRGKKARSSETVAQLQKTN). Residues 159 to 173 (VKVQALVRGKKARSS) form a calmodulin-binding region. Positions 264–271 (KKRSFQAV) match the Nuclear localization signal 1 motif. Disordered stretches follow at residues 268 to 379 (FQAV…KKEI) and 407 to 597 (LIPV…EWKR). A compositionally biased stretch (low complexity) spans 289–300 (STTANSSTSRST). Residues 319 to 329 (ELSKIENDKSK) show a composition bias toward basic and acidic residues. The Nuclear localization signal 2 signature appears at 356 to 363 (HKKASLSN). Residues 414–463 (KESDLDKDEKSLVLDKPEQDELRTAERDDKAEEELKTAERDDSAEEKIQE) are compositionally biased toward basic and acidic residues. Over residues 467–480 (QISSENGNVASENT) the composition is skewed to polar residues. Positions 481–500 (KPSDRRASLPAKIENHHQDD) are enriched in basic and acidic residues. Residues 572-584 (GSMNSDRSFSSSK) are compositionally biased toward polar residues. Residues 585 to 597 (DIGDKSTKAEWKR) are compositionally biased toward basic and acidic residues.

The protein belongs to the IQD family. Binds to multiple calmodulin (CaM) in the presence of Ca(2+) and CaM-like proteins.

Its subcellular location is the nucleus. The protein localises to the nucleus envelope. It is found in the cytoplasm. The protein resides in the cytoskeleton. It localises to the cell membrane. May be involved in cooperative interactions with calmodulins or calmodulin-like proteins. Recruits calmodulin proteins to microtubules, thus being a potential scaffold in cellular signaling and trafficking. May associate with nucleic acids and regulate gene expression at the transcriptional or post-transcriptional level. The protein is Protein IQ-DOMAIN 29 of Arabidopsis thaliana (Mouse-ear cress).